Reading from the N-terminus, the 110-residue chain is MNPYIYLGGAILAEVIGTTLMKFSEGFTRLWPSVGTIICYCASFWLLAQTLAYIPTGIAYAIWSGVGIVLISLLSWGFFGQRLDLPAIIGMMLICAGVLIINLLSRSTPH.

4 consecutive transmembrane segments (helical) span residues 4–21, 34–52, 58–80, and 87–104; these read YIYL…TTLM, VGTI…QTLA, IAYA…GFFG, and AIIG…INLL.

This sequence belongs to the drug/metabolite transporter (DMT) superfamily. Small multidrug resistance (SMR) (TC 2.A.7.1) family. As to quaternary structure, homodimer. Forms an antiparallel dimeric structure. Also forms dimers of homodimers.

The protein resides in the cell inner membrane. With respect to regulation, substrate identity influences both the ground-state and transition-state energies for the conformational exchange process, emphasizing the coupling between substrate binding and transport. Functionally, multidrug efflux protein that confers resistance to a wide range of toxic compounds, including ethidium, methyl viologen, acriflavine, tetraphenylphosphonium (TPP(+)), benzalkonium, propidium, dequalinium and the aminoglycoside antibiotics streptomycin and tobramycin. Can also transport the osmoprotectants betaine and choline. The drug efflux is coupled to an influx of protons. Can couple antiport of a drug to either one or two protons, performing both electrogenic and electroneutral transport of a single substrate. Simultaneously binds and cotransports proton and drug. The protein is Multidrug transporter EmrE (emrE) of Escherichia coli (strain K12).